We begin with the raw amino-acid sequence, 385 residues long: 1-deoxy-D-xylulose 5-phosphate reductoisomerase (385 aa).

Residues Thr-10, Gly-11, Ser-12, Ile-13, Gly-36, Asn-38, and Asn-122 each coordinate NADPH. Lys-123 is a binding site for 1-deoxy-D-xylulose 5-phosphate. Residue Glu-124 coordinates NADPH. Asp-148 contributes to the Mn(2+) binding site. Ser-149, Glu-150, Ser-174, and His-197 together coordinate 1-deoxy-D-xylulose 5-phosphate. Residue Glu-150 participates in Mn(2+) binding. Gly-203 serves as a coordination point for NADPH. Ser-210, Asn-215, Lys-216, and Glu-219 together coordinate 1-deoxy-D-xylulose 5-phosphate. Position 219 (Glu-219) interacts with Mn(2+).

It belongs to the DXR family. The cofactor is Mg(2+). It depends on Mn(2+) as a cofactor.

It catalyses the reaction 2-C-methyl-D-erythritol 4-phosphate + NADP(+) = 1-deoxy-D-xylulose 5-phosphate + NADPH + H(+). It functions in the pathway isoprenoid biosynthesis; isopentenyl diphosphate biosynthesis via DXP pathway; isopentenyl diphosphate from 1-deoxy-D-xylulose 5-phosphate: step 1/6. In terms of biological role, catalyzes the NADPH-dependent rearrangement and reduction of 1-deoxy-D-xylulose-5-phosphate (DXP) to 2-C-methyl-D-erythritol 4-phosphate (MEP). This Citrifermentans bemidjiense (strain ATCC BAA-1014 / DSM 16622 / JCM 12645 / Bem) (Geobacter bemidjiensis) protein is 1-deoxy-D-xylulose 5-phosphate reductoisomerase.